The sequence spans 281 residues: Arabinose operon regulatory protein (281 aa).

Alpha-L-arabinopyanose-binding residues include P8, T24, R38, Y82, and H93. The region spanning 180 to 279 (RDACQYISDH…GASPSEFRAG (100 aa)) is the HTH araC/xylS-type domain. 2 consecutive DNA-binding regions (H-T-H motif) follow at residues 198 to 219 (ASVA…RQQL) and 246 to 269 (IATV…KKCT).

In terms of assembly, homodimer.

Its subcellular location is the cytoplasm. Its function is as follows. Transcription factor that regulates the expression of several genes involved in the transport and metabolism of L-arabinose. The chain is Arabinose operon regulatory protein from Salmonella typhimurium (strain LT2 / SGSC1412 / ATCC 700720).